Consider the following 367-residue polypeptide: Alanine racemase (367 aa).

Lys-40 acts as the Proton acceptor; specific for D-alanine in catalysis. Lys-40 is modified (N6-(pyridoxal phosphate)lysine). Substrate is bound at residue Arg-136. The Proton acceptor; specific for L-alanine role is filled by Tyr-263. Residue Met-310 participates in substrate binding.

The protein belongs to the alanine racemase family. Requires pyridoxal 5'-phosphate as cofactor.

It catalyses the reaction L-alanine = D-alanine. It participates in amino-acid biosynthesis; D-alanine biosynthesis; D-alanine from L-alanine: step 1/1. Its function is as follows. Catalyzes the interconversion of L-alanine and D-alanine. May also act on other amino acids. The protein is Alanine racemase (alr) of Streptococcus thermophilus (strain ATCC BAA-491 / LMD-9).